Here is a 179-residue protein sequence, read N- to C-terminus: Stathmin-2 (179 aa).

The tract at residues 1-26 (MAKTAMAYKEKMKELSMLSLICSCFY) is membrane attachment. Ser-16 is modified (phosphoserine). S-palmitoyl cysteine attachment occurs at residues Cys-22 and Cys-24. The SLD domain occupies 38-179 (DDMEVKQINK…NKELQVELSG (142 aa)). A regulatory/phosphorylation domain region spans residues 39 to 96 (DMEVKQINKRASGQAFELILKPPSPISEAPRTLASPKKKDLSLEEIQKKLEAAEGRRK). Residue Ser-50 is modified to Phosphoserine. Phosphoserine; by MAPK8 is present on residues Ser-62 and Ser-73. The stretch at 75-179 (KKKDLSLEEI…NKELQVELSG (105 aa)) forms a coiled coil. Ser-80 and Ser-97 each carry phosphoserine.

The protein belongs to the stathmin family. In terms of assembly, interacts with ITM2C. Interacts with MAPK8. Interacts with KIFBP. Interacts (via the N-terminal region) with CIB1 (via C-terminal region); the interaction is direct, occurs in a calcium-dependent manner and attenuates the neurite outgrowth inhibition of STMN2. Sumoylated. Post-translationally, phosphorylated by MAPK9 and MAPK10 in the developing brain cortex. Phosphorylated mostly by MAPK8. In terms of processing, N-terminal palmitoylation promotes specific anchoring to the cytosolic leaflet of Golgi membranes and subsequent vesicular trafficking along dendrites and axons. Neuronal Stathmins are substrates for palmitoyltransferases ZDHHC3, ZDHHC7 and ZDHHC15. Expressed in neurons (at protein level). Present in growth cones and abundant in developing neurons.

The protein localises to the cytoplasm. The protein resides in the perinuclear region. It localises to the cell projection. Its subcellular location is the growth cone. It is found in the axon. The protein localises to the membrane. The protein resides in the golgi apparatus. It localises to the endosome. Its subcellular location is the lamellipodium. In terms of biological role, regulator of microtubule stability. When phosphorylated by MAPK8, stabilizes microtubules and consequently controls neurite length in cortical neurons. In the developing brain, negatively regulates the rate of exit from multipolar stage and retards radial migration from the ventricular zone. This Rattus norvegicus (Rat) protein is Stathmin-2 (Stmn2).